The following is a 372-amino-acid chain: Probable peptidoglycan glycosyltransferase FtsW (372 aa).

The Cytoplasmic portion of the chain corresponds to 1–12; that stretch reads MQKKSTISWSYD. A helical membrane pass occupies residues 13–33; the sequence is AWIVICTLSLLALGLLMVASA. At 34–45 the chain is on the periplasmic side; it reads SMVISDRQFGYP. Residues 46–66 traverse the membrane as a helical segment; sequence FHYFIRHLIYLSLGLTLAWVA. Topologically, residues 67–77 are cytoplasmic; the sequence is SRVPIKVWKTY. Residues 78–98 traverse the membrane as a helical segment; it reads SGYLFLVGFLLLILVLAPVIG. Residues 99–109 lie on the Periplasmic side of the membrane; it reads KTVNGSRRWIQ. Residues 110 to 130 traverse the membrane as a helical segment; it reads LGFISLQVSEVVKFVTILYLA. Topologically, residues 131 to 142 are cytoplasmic; sequence SFLQRYQSEVQK. The chain crosses the membrane as a helical span at residues 143–163; it reads ELKGFLKPMLLVGILSGLLLL. The Periplasmic segment spans residues 164-165; the sequence is EP. The chain crosses the membrane as a helical span at residues 166 to 186; that stretch reads DFGAAVVITMTCLALLFLAGV. Arg187 is a topological domain (cytoplasmic). A helical membrane pass occupies residues 188–208; it reads LWPFCVLLVLVAGSLILLAIL. The Periplasmic segment spans residues 209–277; sequence SPYRLQRLTS…LFAVLAEELG (69 aa). A helical transmembrane segment spans residues 278-298; that stretch reads LIGEILLMGLFVLLIGRIILI. At 299–315 the chain is on the cytoplasmic side; that stretch reads GRRAENSNQLYSAYLAY. Residues 316-336 form a helical membrane-spanning segment; the sequence is GIALWLGLQVIINIGVTAGVL. The Periplasmic portion of the chain corresponds to 337–342; that stretch reads PTKGLT. A helical membrane pass occupies residues 343–363; that stretch reads LPFISYGGSSLLMNCLAIGVI. Residues 364–372 are Cytoplasmic-facing; sequence LRIAYETEN.

It belongs to the SEDS family. FtsW subfamily.

Its subcellular location is the cell inner membrane. The catalysed reaction is [GlcNAc-(1-&gt;4)-Mur2Ac(oyl-L-Ala-gamma-D-Glu-L-Lys-D-Ala-D-Ala)](n)-di-trans,octa-cis-undecaprenyl diphosphate + beta-D-GlcNAc-(1-&gt;4)-Mur2Ac(oyl-L-Ala-gamma-D-Glu-L-Lys-D-Ala-D-Ala)-di-trans,octa-cis-undecaprenyl diphosphate = [GlcNAc-(1-&gt;4)-Mur2Ac(oyl-L-Ala-gamma-D-Glu-L-Lys-D-Ala-D-Ala)](n+1)-di-trans,octa-cis-undecaprenyl diphosphate + di-trans,octa-cis-undecaprenyl diphosphate + H(+). It participates in cell wall biogenesis; peptidoglycan biosynthesis. Peptidoglycan polymerase that is essential for cell division. This chain is Probable peptidoglycan glycosyltransferase FtsW, found in Coxiella burnetii (strain RSA 493 / Nine Mile phase I).